A 171-amino-acid polypeptide reads, in one-letter code: Iron-sulfur cluster assembly protein 3 (171 aa).

A mitochondrion-targeting transit peptide spans 1–49 (MLRQTTKRAFLGLASQNPTPFPVVSRLYHPNVIDHYDNPRNVGSFDKND).

The protein belongs to the NifU family. As to quaternary structure, component of the core Fe-S cluster (ISC) assembly machinery. It depends on [2Fe-2S] cluster as a cofactor. As to expression, mostly expressed in flowers and pollen, and, to a lower extent, in leaves and roots.

Its subcellular location is the mitochondrion matrix. It participates in cofactor biosynthesis; iron-sulfur cluster biosynthesis. Its function is as follows. Scaffold protein for the de novo synthesis of iron-sulfur (Fe-S) clusters within mitochondria, which is required for maturation of both mitochondrial and cytoplasmic [2Fe-2S] and [4Fe-4S] proteins. First, a [2Fe-2S] cluster is transiently assembled on the scaffold protein ISCU (ISU1, ISU2 or ISU3). In a second step, the cluster is released from ISCU, transferred to a glutaredoxin, followed by the formation of mitochondrial [2Fe-2S] proteins, the synthesis of [4Fe-4S] clusters and their target-specific insertion into the recipient apoproteins. Cluster assembly on ISCU depends on the function of the cysteine desulfurase complex NFS1-ISD11, which serves as the sulfur donor for cluster synthesis, the iron-binding protein frataxin as the putative iron donor, and the electron transfer chain comprised of ferredoxin reductase and ferredoxin, which receive their electrons from NADH. The protein is Iron-sulfur cluster assembly protein 3 (ISU3) of Arabidopsis thaliana (Mouse-ear cress).